Consider the following 299-residue polypeptide: Pentalenolactone F synthase (299 aa).

Residues His105 and Asp107 each contribute to the Fe cation site. 2-oxoglutarate contacts are provided by Thr133 and Trp251. His266 contributes to the Fe cation binding site. Arg277 provides a ligand contact to 2-oxoglutarate.

This sequence belongs to the TfdA dioxygenase family. The cofactor is Fe(2+).

It carries out the reaction pentalenolactone D + 2 2-oxoglutarate + 2 O2 = pentalenolactone F + 2 succinate + 2 CO2 + H2O. Its pathway is antibiotic biosynthesis; pentalenolactone biosynthesis. Activated by ascorbate. Catalyzes the Fe(2+) and alpha-ketoglutarate-dependent oxidation of pentalenolactone D to pentalenolactone F in the biosynthesis of pentalenolactone antibiotic. Also able to catalyze the oxidation of pentalenolactone D to pentalenolactone E. The protein is Pentalenolactone F synthase (pntD) of Streptomyces arenae.